A 350-amino-acid chain; its full sequence is Flap endonuclease 1 (350 aa).

The N-domain stretch occupies residues 1-101; sequence MGVNIREVIP…LEIERRKRVK (101 aa). Aspartate 30, aspartate 83, glutamate 155, glutamate 157, aspartate 176, aspartate 178, and aspartate 239 together coordinate Mg(2+). The I-domain stretch occupies residues 119 to 261; sequence AARRYAQMAA…TALKMVKAHR (143 aa). The interaction with PCNA stretch occupies residues 340–348; it reads QQMGLDAWL.

This sequence belongs to the XPG/RAD2 endonuclease family. FEN1 subfamily. As to quaternary structure, interacts with PCNA. PCNA stimulates the nuclease activity without altering cleavage specificity. The cofactor is Mg(2+).

Its function is as follows. Structure-specific nuclease with 5'-flap endonuclease and 5'-3' exonuclease activities involved in DNA replication and repair. During DNA replication, cleaves the 5'-overhanging flap structure that is generated by displacement synthesis when DNA polymerase encounters the 5'-end of a downstream Okazaki fragment. Binds the unpaired 3'-DNA end and kinks the DNA to facilitate 5' cleavage specificity. Cleaves one nucleotide into the double-stranded DNA from the junction in flap DNA, leaving a nick for ligation. Also involved in the base excision repair (BER) pathway. Acts as a genome stabilization factor that prevents flaps from equilibrating into structures that lead to duplications and deletions. Also possesses 5'-3' exonuclease activity on nicked or gapped double-stranded DNA. The sequence is that of Flap endonuclease 1 from Hyperthermus butylicus (strain DSM 5456 / JCM 9403 / PLM1-5).